The following is a 180-amino-acid chain: Acireductone dioxygenase (180 aa).

Residues His-97, His-99, Glu-103, and His-141 each coordinate Fe(2+). Ni(2+) contacts are provided by His-97, His-99, Glu-103, and His-141.

It belongs to the acireductone dioxygenase (ARD) family. In terms of assembly, monomer. Fe(2+) is required as a cofactor. It depends on Ni(2+) as a cofactor.

It carries out the reaction 1,2-dihydroxy-5-(methylsulfanyl)pent-1-en-3-one + O2 = 3-(methylsulfanyl)propanoate + CO + formate + 2 H(+). It catalyses the reaction 1,2-dihydroxy-5-(methylsulfanyl)pent-1-en-3-one + O2 = 4-methylsulfanyl-2-oxobutanoate + formate + 2 H(+). Its pathway is amino-acid biosynthesis; L-methionine biosynthesis via salvage pathway; L-methionine from S-methyl-5-thio-alpha-D-ribose 1-phosphate: step 5/6. Catalyzes 2 different reactions between oxygen and the acireductone 1,2-dihydroxy-3-keto-5-methylthiopentene (DHK-MTPene) depending upon the metal bound in the active site. Fe-containing acireductone dioxygenase (Fe-ARD) produces formate and 2-keto-4-methylthiobutyrate (KMTB), the alpha-ketoacid precursor of methionine in the methionine recycle pathway. Ni-containing acireductone dioxygenase (Ni-ARD) produces methylthiopropionate, carbon monoxide and formate, and does not lie on the methionine recycle pathway. This Serratia proteamaculans (strain 568) protein is Acireductone dioxygenase.